A 292-amino-acid polypeptide reads, in one-letter code: NAD kinase (292 aa).

Asp-73 functions as the Proton acceptor in the catalytic mechanism. NAD(+) contacts are provided by residues 73–74 (DG), 147–148 (NE), His-158, Arg-175, Asp-177, 188–193 (TAYSLS), and Gln-247.

Belongs to the NAD kinase family. A divalent metal cation is required as a cofactor.

It localises to the cytoplasm. It catalyses the reaction NAD(+) + ATP = ADP + NADP(+) + H(+). In terms of biological role, involved in the regulation of the intracellular balance of NAD and NADP, and is a key enzyme in the biosynthesis of NADP. Catalyzes specifically the phosphorylation on 2'-hydroxyl of the adenosine moiety of NAD to yield NADP. This chain is NAD kinase, found in Enterobacter sp. (strain 638).